Reading from the N-terminus, the 175-residue chain is Translation initiation factor IF-3 (175 aa).

The protein belongs to the IF-3 family. Monomer.

Its subcellular location is the cytoplasm. Its function is as follows. IF-3 binds to the 30S ribosomal subunit and shifts the equilibrium between 70S ribosomes and their 50S and 30S subunits in favor of the free subunits, thus enhancing the availability of 30S subunits on which protein synthesis initiation begins. This chain is Translation initiation factor IF-3, found in Staphylococcus carnosus (strain TM300).